We begin with the raw amino-acid sequence, 298 residues long: Multifunctional dioxygenase ausE (298 aa).

Substrate-binding residues include Arg72 and Gln127. 2 residues coordinate Fe cation: His130 and Asp132. Thr167 lines the substrate pocket. Residue His214 participates in Fe cation binding. A substrate-binding site is contributed by Arg226.

It belongs to the PhyH family. As to quaternary structure, homodimer. Fe cation serves as cofactor.

It carries out the reaction preaustinoid A1 + 2-oxoglutarate + O2 = preaustinoid A2 + succinate + CO2 + H2O. The enzyme catalyses preaustinoid A2 + 2-oxoglutarate + O2 = preaustinoid A3 + succinate + CO2 + H2O. It catalyses the reaction berkeleyone A + 2-oxoglutarate + O2 = preaustinoid A + succinate + CO2 + H2O. It functions in the pathway secondary metabolite biosynthesis; terpenoid biosynthesis. Functionally, multifunctional dioxygenase; part of the gene cluster B that mediates the biosynthesis of austinol and dehydroaustinol, two fungal meroterpenoids. The first step of the pathway is the synthesis of 3,5-dimethylorsellinic acid by the polyketide synthase ausA. 3,5-dimethylorsellinic acid is then prenylated by the polyprenyl transferase ausN. Further epoxidation by the FAD-dependent monooxygenase ausM and cyclization by the probable terpene cyclase ausL lead to the formation of protoaustinoid A. Protoaustinoid A is then oxidized to spiro-lactone preaustinoid A3 by the combined action of the FAD-binding monooxygenases ausB and ausC, and the dioxygenase ausE. Acid-catalyzed keto-rearrangement and ring contraction of the tetraketide portion of preaustinoid A3 by ausJ lead to the formation of preaustinoid A4. The aldo-keto reductase ausK, with the help of ausH, is involved in the next step by transforming preaustinoid A4 into isoaustinone which is in turn hydroxylated by the P450 monooxygenase ausI to form austinolide. Finally, the cytochrome P450 monooxygenase ausG modifies austinolide to austinol. Austinol can be further modified to dehydroaustinol which forms a diffusible complex with diorcinol that initiates conidiation. Due to genetic rearrangements of the clusters and the subsequent loss of some enzymes, the end products of the Emericella nidulans austinoid biosynthesis clusters are austinol and dehydroaustinol, even if additional enzymes, such as the O-acetyltransferase ausQ and the cytochrome P450 monooxygenase ausR are still functional. The polypeptide is Multifunctional dioxygenase ausE (Emericella nidulans (strain FGSC A4 / ATCC 38163 / CBS 112.46 / NRRL 194 / M139) (Aspergillus nidulans)).